A 425-amino-acid chain; its full sequence is Serine--tRNA ligase (425 aa).

228-230 (TAE) lines the L-serine pocket. ATP is bound at residue 259–261 (RSE). Residue glutamate 282 participates in L-serine binding. 346–349 (EIAS) provides a ligand contact to ATP. Serine 382 contacts L-serine.

This sequence belongs to the class-II aminoacyl-tRNA synthetase family. Type-1 seryl-tRNA synthetase subfamily. As to quaternary structure, homodimer. The tRNA molecule binds across the dimer.

The protein localises to the cytoplasm. The catalysed reaction is tRNA(Ser) + L-serine + ATP = L-seryl-tRNA(Ser) + AMP + diphosphate + H(+). The enzyme catalyses tRNA(Sec) + L-serine + ATP = L-seryl-tRNA(Sec) + AMP + diphosphate + H(+). It participates in aminoacyl-tRNA biosynthesis; selenocysteinyl-tRNA(Sec) biosynthesis; L-seryl-tRNA(Sec) from L-serine and tRNA(Sec): step 1/1. Functionally, catalyzes the attachment of serine to tRNA(Ser). Is also able to aminoacylate tRNA(Sec) with serine, to form the misacylated tRNA L-seryl-tRNA(Sec), which will be further converted into selenocysteinyl-tRNA(Sec). This Rickettsia rickettsii (strain Iowa) protein is Serine--tRNA ligase.